The chain runs to 375 residues: uncharacterized protein (375 aa).

Positions 78–302 (KKIEITSTIH…IFPNIRITSP (225 aa)) constitute a Radical SAM core domain. The [4Fe-4S] cluster site is built by Cys-92, Cys-98, and Cys-101.

The cofactor is [4Fe-4S] cluster.

This is an uncharacterized protein from Methanocaldococcus jannaschii (strain ATCC 43067 / DSM 2661 / JAL-1 / JCM 10045 / NBRC 100440) (Methanococcus jannaschii).